A 408-amino-acid chain; its full sequence is Imidazolonepropionase (408 aa).

Fe(3+)-binding residues include histidine 73 and histidine 75. Zn(2+) contacts are provided by histidine 73 and histidine 75. Residues arginine 82, tyrosine 145, and histidine 178 each contribute to the 4-imidazolone-5-propanoate site. Residue tyrosine 145 participates in N-formimidoyl-L-glutamate binding. Histidine 243 is a Fe(3+) binding site. Histidine 243 is a Zn(2+) binding site. Glutamine 246 lines the 4-imidazolone-5-propanoate pocket. Aspartate 318 provides a ligand contact to Fe(3+). Residue aspartate 318 coordinates Zn(2+). N-formimidoyl-L-glutamate contacts are provided by asparagine 320 and glycine 322. Serine 323 contributes to the 4-imidazolone-5-propanoate binding site.

Belongs to the metallo-dependent hydrolases superfamily. HutI family. The cofactor is Zn(2+). Requires Fe(3+) as cofactor.

It localises to the cytoplasm. The catalysed reaction is 4-imidazolone-5-propanoate + H2O = N-formimidoyl-L-glutamate. The protein operates within amino-acid degradation; L-histidine degradation into L-glutamate; N-formimidoyl-L-glutamate from L-histidine: step 3/3. In terms of biological role, catalyzes the hydrolytic cleavage of the carbon-nitrogen bond in imidazolone-5-propanoate to yield N-formimidoyl-L-glutamate. It is the third step in the universal histidine degradation pathway. The sequence is that of Imidazolonepropionase from Shewanella piezotolerans (strain WP3 / JCM 13877).